The following is a 355-amino-acid chain: dTDP-D-glucose 4,6-dehydratase (355 aa).

Threonine 142 is a binding site for substrate. Aspartate 143 (proton donor) is an active-site residue. Catalysis depends on proton acceptor residues glutamate 144 and tyrosine 166.

It belongs to the NAD(P)-dependent epimerase/dehydratase family. dTDP-glucose dehydratase subfamily. The cofactor is NAD(+).

The enzyme catalyses dTDP-alpha-D-glucose = dTDP-4-dehydro-6-deoxy-alpha-D-glucose + H2O. The protein is dTDP-D-glucose 4,6-dehydratase (Tgds) of Mus musculus (Mouse).